The primary structure comprises 286 residues: Ribosomal RNA small subunit methyltransferase H (286 aa).

S-adenosyl-L-methionine contacts are provided by residues 30–32 (GGH), aspartate 49, phenylalanine 88, aspartate 97, and glutamine 104. The segment at 260 to 286 (HPLQPSDEESFNNPASRSAKLRALEMR) is disordered.

The protein belongs to the methyltransferase superfamily. RsmH family.

The protein localises to the cytoplasm. The catalysed reaction is cytidine(1402) in 16S rRNA + S-adenosyl-L-methionine = N(4)-methylcytidine(1402) in 16S rRNA + S-adenosyl-L-homocysteine + H(+). Functionally, specifically methylates the N4 position of cytidine in position 1402 (C1402) of 16S rRNA. In Solibacter usitatus (strain Ellin6076), this protein is Ribosomal RNA small subunit methyltransferase H.